The sequence spans 258 residues: Hydroxyethylthiazole kinase (258 aa).

Substrate is bound at residue Met37. ATP is bound by residues Arg112 and Thr158. Substrate is bound at residue Ala185.

This sequence belongs to the Thz kinase family. The cofactor is Mg(2+).

The enzyme catalyses 5-(2-hydroxyethyl)-4-methylthiazole + ATP = 4-methyl-5-(2-phosphooxyethyl)-thiazole + ADP + H(+). The protein operates within cofactor biosynthesis; thiamine diphosphate biosynthesis; 4-methyl-5-(2-phosphoethyl)-thiazole from 5-(2-hydroxyethyl)-4-methylthiazole: step 1/1. Its function is as follows. Catalyzes the phosphorylation of the hydroxyl group of 4-methyl-5-beta-hydroxyethylthiazole (THZ). The polypeptide is Hydroxyethylthiazole kinase (Rhizobium etli (strain CIAT 652)).